The chain runs to 4753 residues: Dynein heavy chain domain-containing protein 1 (4753 aa).

Coiled-coil stretches lie at residues 826–858 (IHAI…ALHE) and 936–991 (KLQQ…LSEL). Positions 2688 to 2766 (HLGKDHQESE…SRGMKESISH (79 aa)) are disordered. Positions 2695 to 2712 (ESEEEEEEERVPEVESEG) are enriched in acidic residues. The span at 2740–2751 (RVSNSRDPSLTP) shows a compositional bias: polar residues. 3 coiled-coil regions span residues 3125–3227 (LQQQ…MSKA), 3590–3651 (MRNQ…QGSK), and 4431–4460 (GAQL…LTHV). The disordered stretch occupies residues 3580 to 3657 (ALTEGRGKGL…QGSKPAYETQ (78 aa)). Over residues 3602–3615 (KEEDDESEESNEAE) the composition is skewed to acidic residues. Positions 3616–3631 (DQTKEQKAEERKNEQE) are enriched in basic and acidic residues. Acidic residues predominate over residues 3632–3641 (KEQEENEEKE). Positions 4669 to 4697 (ALQDSPSSQPSPLPPVSISTQAPGTSDLP) are disordered.

This sequence belongs to the dynein heavy chain family. Expressed in spermatozoa (at protein level).

It is found in the cell projection. The protein resides in the cilium. Its subcellular location is the flagellum. Essential for the normal assembly and function of sperm flagella axonemes. The protein is Dynein heavy chain domain-containing protein 1 (DNHD1) of Homo sapiens (Human).